Consider the following 64-residue polypeptide: Small ribosomal subunit protein eS17 (64 aa).

This sequence belongs to the eukaryotic ribosomal protein eS17 family.

This chain is Small ribosomal subunit protein eS17, found in Methanosarcina mazei (strain ATCC BAA-159 / DSM 3647 / Goe1 / Go1 / JCM 11833 / OCM 88) (Methanosarcina frisia).